We begin with the raw amino-acid sequence, 355 residues long: WAT1-related protein At3g28130 (355 aa).

A run of 10 helical transmembrane segments spans residues 11–31 (AVLLTAMLATETGNVAMNTLF), 42–62 (YTFLIYSYLIGSIVLLPSHIF), 80–100 (IGVLGLLGSTYLITGFIGIEY), 104–124 (TLASAISNINPAITFILAIIF), 136–156 (SVAKMVGTIVSLVGALVVVLY), 186–206 (WIIGGCLLAIKDTLVPVAFIL), 218–238 (FTVSFFYFLIASILTSLIGIV), 244–264 (PSIWIIHFDITLVCIVVGGIF), 290–310 (LSILIAVIMGAIFLGDSFYLG), and 311–331 (SLVGGILISLGFYTVMWGKAK). The EamA domain maps to 29-154 (TLFKAATSKG…VSLVGALVVV (126 aa)).

The protein belongs to the drug/metabolite transporter (DMT) superfamily. Plant drug/metabolite exporter (P-DME) (TC 2.A.7.4) family.

The protein resides in the membrane. The chain is WAT1-related protein At3g28130 from Arabidopsis thaliana (Mouse-ear cress).